The following is a 299-amino-acid chain: Putative adenosine/adenine deaminase (299 aa).

2 residues coordinate Zn(2+): His16 and His18. Residues His18 and Gly157 each contribute to the substrate site. His184 serves as a coordination point for Zn(2+). Glu187 acts as the Proton donor in catalysis. Asp265 is a Zn(2+) binding site. Residue Asp266 participates in substrate binding.

The protein belongs to the metallo-dependent hydrolases superfamily. Adenosine and AMP deaminases family. The cofactor is Zn(2+).

Functionally, putative nucleoside deaminase. May catalyze the hydrolytic deamination of adenosine or some similar substrate and play a role in purine metabolism. The protein is Putative adenosine/adenine deaminase of Treponema pallidum (strain Nichols).